The sequence spans 410 residues: Riboflavin biosynthesis protein RibBA (410 aa).

The segment at 1 to 205 (MENKRIDTIE…IKDLVAFQMR (205 aa)) is DHBP synthase. D-ribulose 5-phosphate-binding positions include 30-31 (RE), aspartate 35, 144-148 (RVGHT), and glutamate 168. Mg(2+) is bound at residue glutamate 31. Histidine 147 serves as a coordination point for Mg(2+). The GTP cyclohydrolase II stretch occupies residues 206–410 (RSKLVQRAVE…ISCSCGSGNH (205 aa)). 256-260 (RVHSQ) provides a ligand contact to GTP. Zn(2+) contacts are provided by cysteine 261, cysteine 272, and cysteine 274. Residues glutamine 277, 299–301 (EGR), and threonine 321 contribute to the GTP site. The active-site Proton acceptor; for GTP cyclohydrolase activity is the aspartate 333. The active-site Nucleophile; for GTP cyclohydrolase activity is arginine 335. GTP contacts are provided by threonine 356 and lysine 361.

It in the N-terminal section; belongs to the DHBP synthase family. This sequence in the C-terminal section; belongs to the GTP cyclohydrolase II family. Requires Mg(2+) as cofactor. Mn(2+) serves as cofactor. It depends on Zn(2+) as a cofactor.

The enzyme catalyses D-ribulose 5-phosphate = (2S)-2-hydroxy-3-oxobutyl phosphate + formate + H(+). It catalyses the reaction GTP + 4 H2O = 2,5-diamino-6-hydroxy-4-(5-phosphoribosylamino)-pyrimidine + formate + 2 phosphate + 3 H(+). The protein operates within cofactor biosynthesis; riboflavin biosynthesis; 2-hydroxy-3-oxobutyl phosphate from D-ribulose 5-phosphate: step 1/1. It functions in the pathway cofactor biosynthesis; riboflavin biosynthesis; 5-amino-6-(D-ribitylamino)uracil from GTP: step 1/4. In terms of biological role, catalyzes the conversion of D-ribulose 5-phosphate to formate and 3,4-dihydroxy-2-butanone 4-phosphate. Catalyzes the conversion of GTP to 2,5-diamino-6-ribosylamino-4(3H)-pyrimidinone 5'-phosphate (DARP), formate and pyrophosphate. This chain is Riboflavin biosynthesis protein RibBA, found in Chlorobium phaeovibrioides (strain DSM 265 / 1930) (Prosthecochloris vibrioformis (strain DSM 265)).